The primary structure comprises 213 residues: Heat shock protein 27 (213 aa).

Ser-58 and Ser-75 each carry phosphoserine. A sHSP domain is found at 71–182 (SRRASGGPNA…SERIVQIQQT (112 aa)). The tract at residues 157 to 213 (VLTLKAPPPPSKEQAKSERIVQIQQTGPAHLSVKAPAPEAGDGKAENGSGEKMETSK) is disordered. Positions 197-213 (GDGKAENGSGEKMETSK) are enriched in basic and acidic residues.

This sequence belongs to the small heat shock protein (HSP20) family.

This chain is Heat shock protein 27 (Hsp27), found in Drosophila melanogaster (Fruit fly).